We begin with the raw amino-acid sequence, 277 residues long: Thymidylate synthase (277 aa).

Arg21 is a dUMP binding site. Residue His51 coordinates (6R)-5,10-methylene-5,6,7,8-tetrahydrofolate. DUMP is bound at residue 139–140; the sequence is RR. Catalysis depends on Cys159, which acts as the Nucleophile. DUMP-binding positions include 179–182, Asn190, and 220–222; these read RSAD and HIY. Asp182 is a (6R)-5,10-methylene-5,6,7,8-tetrahydrofolate binding site. Ala276 is a (6R)-5,10-methylene-5,6,7,8-tetrahydrofolate binding site.

It belongs to the thymidylate synthase family. Bacterial-type ThyA subfamily. Homodimer.

It is found in the cytoplasm. The catalysed reaction is dUMP + (6R)-5,10-methylene-5,6,7,8-tetrahydrofolate = 7,8-dihydrofolate + dTMP. The protein operates within pyrimidine metabolism; dTTP biosynthesis. In terms of biological role, catalyzes the reductive methylation of 2'-deoxyuridine-5'-monophosphate (dUMP) to 2'-deoxythymidine-5'-monophosphate (dTMP) while utilizing 5,10-methylenetetrahydrofolate (mTHF) as the methyl donor and reductant in the reaction, yielding dihydrofolate (DHF) as a by-product. This enzymatic reaction provides an intracellular de novo source of dTMP, an essential precursor for DNA biosynthesis. The sequence is that of Thymidylate synthase from Ruegeria sp. (strain TM1040) (Silicibacter sp.).